The following is a 272-amino-acid chain: 3-methyl-2-oxobutanoate hydroxymethyltransferase (272 aa).

2 residues coordinate Mg(2+): D50 and D89. Residues 50–51, D89, and K119 contribute to the 3-methyl-2-oxobutanoate site; that span reads DS. Mg(2+) is bound at residue E121. The active-site Proton acceptor is E188.

This sequence belongs to the PanB family. Homodecamer; pentamer of dimers. Requires Mg(2+) as cofactor.

Its subcellular location is the cytoplasm. It carries out the reaction 3-methyl-2-oxobutanoate + (6R)-5,10-methylene-5,6,7,8-tetrahydrofolate + H2O = 2-dehydropantoate + (6S)-5,6,7,8-tetrahydrofolate. It participates in cofactor biosynthesis; (R)-pantothenate biosynthesis; (R)-pantoate from 3-methyl-2-oxobutanoate: step 1/2. Functionally, catalyzes the reversible reaction in which hydroxymethyl group from 5,10-methylenetetrahydrofolate is transferred onto alpha-ketoisovalerate to form ketopantoate. The sequence is that of 3-methyl-2-oxobutanoate hydroxymethyltransferase from Methylobacterium radiotolerans (strain ATCC 27329 / DSM 1819 / JCM 2831 / NBRC 15690 / NCIMB 10815 / 0-1).